Consider the following 44-residue polypeptide: Thymosin beta-10 (44 aa).

Composition is skewed to basic and acidic residues over residues 1-25 (MADK…ETQE) and 33-44 (ETIEQEKRSEIS). Positions 1–44 (MADKPDMGEIASFDKAKLKKTETQEKNTLPTKETIEQEKRSEIS) are disordered. A2 carries the N-acetylalanine modification. K4 is modified (N6-acetyllysine). A Phosphoserine modification is found at S12. K15 bears the N6-acetyllysine mark. Phosphothreonine occurs at positions 21, 23, and 34. An N6-acetyllysine modification is found at K39. A Phosphoserine modification is found at S41.

It belongs to the thymosin beta family.

It localises to the cytoplasm. It is found in the cytoskeleton. Plays an important role in the organization of the cytoskeleton. Binds to and sequesters actin monomers (G actin) and therefore inhibits actin polymerization. This chain is Thymosin beta-10 (Tmsb10), found in Rattus norvegicus (Rat).